The primary structure comprises 118 residues: Ribonuclease P protein component (118 aa).

Belongs to the RnpA family. In terms of assembly, consists of a catalytic RNA component (M1 or rnpB) and a protein subunit.

The enzyme catalyses Endonucleolytic cleavage of RNA, removing 5'-extranucleotides from tRNA precursor.. In terms of biological role, RNaseP catalyzes the removal of the 5'-leader sequence from pre-tRNA to produce the mature 5'-terminus. It can also cleave other RNA substrates such as 4.5S RNA. The protein component plays an auxiliary but essential role in vivo by binding to the 5'-leader sequence and broadening the substrate specificity of the ribozyme. The sequence is that of Ribonuclease P protein component from Shewanella oneidensis (strain ATCC 700550 / JCM 31522 / CIP 106686 / LMG 19005 / NCIMB 14063 / MR-1).